The following is a 122-amino-acid chain: Large ribosomal subunit protein uL18 (122 aa).

A disordered region spans residues 1–24; that stretch reads MSTLSRKQQTQKRHRRLRRHLSGT. Positions 9 to 21 are enriched in basic residues; the sequence is QTQKRHRRLRRHL.

The protein belongs to the universal ribosomal protein uL18 family. Part of the 50S ribosomal subunit; part of the 5S rRNA/L5/L18/L25 subcomplex. Contacts the 5S and 23S rRNAs.

In terms of biological role, this is one of the proteins that bind and probably mediate the attachment of the 5S RNA into the large ribosomal subunit, where it forms part of the central protuberance. This chain is Large ribosomal subunit protein uL18, found in Synechococcus sp. (strain WH7803).